Reading from the N-terminus, the 299-residue chain is Acetylglutamate kinase (299 aa).

Substrate contacts are provided by residues 70–71 (GG), arginine 92, and asparagine 186.

It belongs to the acetylglutamate kinase family. ArgB subfamily.

The protein localises to the cytoplasm. The enzyme catalyses N-acetyl-L-glutamate + ATP = N-acetyl-L-glutamyl 5-phosphate + ADP. Its pathway is amino-acid biosynthesis; L-arginine biosynthesis; N(2)-acetyl-L-ornithine from L-glutamate: step 2/4. Its function is as follows. Catalyzes the ATP-dependent phosphorylation of N-acetyl-L-glutamate. The protein is Acetylglutamate kinase of Caldanaerobacter subterraneus subsp. tengcongensis (strain DSM 15242 / JCM 11007 / NBRC 100824 / MB4) (Thermoanaerobacter tengcongensis).